A 118-amino-acid chain; its full sequence is Large ribosomal subunit protein bL20 (118 aa).

Belongs to the bacterial ribosomal protein bL20 family.

Its function is as follows. Binds directly to 23S ribosomal RNA and is necessary for the in vitro assembly process of the 50S ribosomal subunit. It is not involved in the protein synthesizing functions of that subunit. The chain is Large ribosomal subunit protein bL20 from Lactobacillus johnsonii (strain CNCM I-12250 / La1 / NCC 533).